The chain runs to 703 residues: Ubiquitin-like modifier-activating enzyme ATG7 (703 aa).

Position 2 is an N-acetylalanine (alanine 2). Positions 15 to 17 (FAP) match the FAP motif motif. Residue lysine 45 forms a Glycyl lysine isopeptide (Lys-Gly) (interchain with G-Cter in ubiquitin) linkage. Catalysis depends on cysteine 572, which acts as the Glycyl thioester intermediate. Serine 698 carries the post-translational modification Phosphoserine.

The protein belongs to the ATG7 family. In terms of assembly, homodimer. Interacts with ATG3; this interaction is essential for the transfer of ATG8-like proteins's thioester from ATG7 to ATG3 and plays a role in the conjugation of ATG12 to ATG5. Interacts with ATG12. Forms intermediate conjugates with GABARAPL1. Forms intermediate conjugates with ATG8-like proteins such as GABARAP, GABARAPL2 or MAP1LC3A. Interacts with EP300 acetyltransferase. Interacts with FOXO1. Acetylated by EP300. In terms of processing, polyubiquitinated on Lys-45 via 'Lys-63'-linked ubiquitin by TRIM32; this modification positiely regulates ATG8 and ATG12 activating enzyme activity leading to initiation of autophagy under metabolic stress. As to expression, widely expressed, especially in kidney, liver, lymph nodes and bone marrow.

Its subcellular location is the cytoplasm. It localises to the preautophagosomal structure. Functionally, E1-like activating enzyme involved in the 2 ubiquitin-like systems required for cytoplasm to vacuole transport (Cvt) and autophagy. Activates ATG12 for its conjugation with ATG5 as well as the ATG8 family proteins for their conjugation with phosphatidylethanolamine. Both systems are needed for the ATG8 association to Cvt vesicles and autophagosomes membranes. Required for autophagic death induced by caspase-8 inhibition. Facilitates LC3-I lipidation with phosphatidylethanolamine to form LC3-II which is found on autophagosomal membranes. Required for mitophagy which contributes to regulate mitochondrial quantity and quality by eliminating the mitochondria to a basal level to fulfill cellular energy requirements and preventing excess ROS production. Modulates p53/TP53 activity to regulate cell cycle and survival during metabolic stress. Also plays a key role in the maintenance of axonal homeostasis, the prevention of axonal degeneration, the maintenance of hematopoietic stem cells, the formation of Paneth cell granules, as well as in adipose differentiation. Plays a role in regulating the liver clock and glucose metabolism by mediating the autophagic degradation of CRY1 (clock repressor) in a time-dependent manner. The chain is Ubiquitin-like modifier-activating enzyme ATG7 from Homo sapiens (Human).